Here is a 143-residue protein sequence, read N- to C-terminus: Large ribosomal subunit protein uL13 (143 aa).

This sequence belongs to the universal ribosomal protein uL13 family. As to quaternary structure, part of the 50S ribosomal subunit.

Its function is as follows. This protein is one of the early assembly proteins of the 50S ribosomal subunit, although it is not seen to bind rRNA by itself. It is important during the early stages of 50S assembly. In Natranaerobius thermophilus (strain ATCC BAA-1301 / DSM 18059 / JW/NM-WN-LF), this protein is Large ribosomal subunit protein uL13.